Here is a 46-residue protein sequence, read N- to C-terminus: Large ribosomal subunit protein bL34 (46 aa).

The protein belongs to the bacterial ribosomal protein bL34 family.

In Synechococcus sp. (strain JA-2-3B'a(2-13)) (Cyanobacteria bacterium Yellowstone B-Prime), this protein is Large ribosomal subunit protein bL34.